The sequence spans 317 residues: Type II methyltransferase M.NgoBI (317 aa).

The SAM-dependent MTase C5-type domain maps to 2–302; that stretch reads YKTIDLFSGI…KICSLLFPAR (301 aa). C71 is a catalytic residue.

Belongs to the class I-like SAM-binding methyltransferase superfamily. C5-methyltransferase family.

The catalysed reaction is a 2'-deoxycytidine in DNA + S-adenosyl-L-methionine = a 5-methyl-2'-deoxycytidine in DNA + S-adenosyl-L-homocysteine + H(+). Functionally, a methylase, recognizes the double-stranded sequence 5'-RGCGCY-3', methylates C-5 on both strands, and protects the DNA from cleavage by the NgoBI endonuclease. This is Type II methyltransferase M.NgoBI (ngoBIM) from Neisseria gonorrhoeae.